We begin with the raw amino-acid sequence, 329 residues long: MLKPMYYEFFFIFPKEQELFESFLLDTTHLALEESSLESLKAFDDKETIEFISQSSWHYFATHDPLKENLKEKPPHLKNFVILRSQKDLNDSLIPALKAFCLSLQQNLQSGFDFFYLSRNLASKDWLEAYKQAILPVQCAKFYIHPSWHQKPSHVATDDSIMIDPALAFGSGHHESTSICLELLSNLDLKRKNALDVGCGSGILSIALKKQGVSALSACDTDSLAVEETLKNFSLNQITLLAQDKVIHGSTQKIEGRFDIIVANIVADVIKSLYSEFVRLCNHTLILSGILETHLNSVLQIYYNGFEVLEQRQRNEWVALKLLKKQSIN.

S-adenosyl-L-methionine-binding residues include T177, G198, D220, and N264.

Belongs to the methyltransferase superfamily. PrmA family.

The protein localises to the cytoplasm. It carries out the reaction L-lysyl-[protein] + 3 S-adenosyl-L-methionine = N(6),N(6),N(6)-trimethyl-L-lysyl-[protein] + 3 S-adenosyl-L-homocysteine + 3 H(+). In terms of biological role, methylates ribosomal protein L11. This chain is Ribosomal protein L11 methyltransferase, found in Helicobacter pylori (strain Shi470).